Here is a 558-residue protein sequence, read N- to C-terminus: MDFFKKEILDWSIYLSLHYIARVFSNFSTSHIIQDYNLVRTYEKVDKTIVDFLSRLPNLFHILEYGENILHIYSMDDANTNIIIFFLDRVLNINKNGSFIHNLRLSSSINIKEYVYQLVNNDHPDNRIRLMLENGRRTRHFLSYISDTVNIYICILINHGFYIDAEDSYGCTLLHRCIYHYKKSESESYNELIKILLNNGSDVDKKDTYGNTPFILLCKHDINNVELFEICLENANIDSVDFNRYTPLHYVSCRNKYDFVKLLISKGANVNARNRFGTTPFYCGIIHGISLIKLYLESDTELEIDNEHIVRHLIIFDAVESLDYLLSRGVIDINYRTIYNETSIYDAVSYNAYNTLVYLLNRNGDFETITTSGCTCISEAVANNNKIIMEVLLSKRPSLKIMIQSMIAITKHKQHNADLLKMCIKYTACMTDYDTLIDVQSLQQYKWYILKCFDEIDIMKRCYIKNKTVFQLVFCIKDINTLMRYGKHPSFVKCTSLDVYGSRVRNIIASIRYRQRLISLLSKKLDPGDKWSCFPNEIKYKILENFNDNELSTYLKIL.

ANK repeat units lie at residues 65–95, 169–205, 209–239, 243–272, 276–304, 339–368, and 372–401; these read YGEN…NINK, YGCT…DVDK, YGNT…NIDS, NRYT…NVNA, FGTT…ELEI, YNET…DFET, and SGCT…SLKI.

Belongs to the orthopoxvirus OPG189 protein family.

Functionally, contributes to viral release without involving rearrangement of host actin. The chain is Ankyrin repeat protein OPG189 (OPG189) from Vaccinia virus (strain Western Reserve) (VACV).